The following is a 333-amino-acid chain: Lipoyl synthase (333 aa).

Residues 1–15 (MSTLVESPVPSNDSQ) show a composition bias toward polar residues. The segment at 1–34 (MSTLVESPVPSNDSQAAAPAAYDPTQKQKSQAKT) is disordered. Residues Cys-80, Cys-85, Cys-91, Cys-106, Cys-110, Cys-113, and Ser-320 each contribute to the [4Fe-4S] cluster site. Residues 91-309 (CFGKGTATFM…EREAYAMGFT (219 aa)) form the Radical SAM core domain.

This sequence belongs to the radical SAM superfamily. Lipoyl synthase family. The cofactor is [4Fe-4S] cluster.

The protein localises to the cytoplasm. It catalyses the reaction [[Fe-S] cluster scaffold protein carrying a second [4Fe-4S](2+) cluster] + N(6)-octanoyl-L-lysyl-[protein] + 2 oxidized [2Fe-2S]-[ferredoxin] + 2 S-adenosyl-L-methionine + 4 H(+) = [[Fe-S] cluster scaffold protein] + N(6)-[(R)-dihydrolipoyl]-L-lysyl-[protein] + 4 Fe(3+) + 2 hydrogen sulfide + 2 5'-deoxyadenosine + 2 L-methionine + 2 reduced [2Fe-2S]-[ferredoxin]. The protein operates within protein modification; protein lipoylation via endogenous pathway; protein N(6)-(lipoyl)lysine from octanoyl-[acyl-carrier-protein]: step 2/2. Catalyzes the radical-mediated insertion of two sulfur atoms into the C-6 and C-8 positions of the octanoyl moiety bound to the lipoyl domains of lipoate-dependent enzymes, thereby converting the octanoylated domains into lipoylated derivatives. The sequence is that of Lipoyl synthase from Bordetella bronchiseptica (strain ATCC BAA-588 / NCTC 13252 / RB50) (Alcaligenes bronchisepticus).